Consider the following 771-residue polypeptide: Polyribonucleotide nucleotidyltransferase (771 aa).

Residues Asp-487 and Asp-493 each coordinate Mg(2+). The KH domain maps to 554–613 (PRIETMQIDKAKIRDVIGTGGKVIREIVATTGAKVDIDDEGLIKISSSDLDQIEAARKWI). An S1 motif domain is found at 623-691 (GKIYDGKVVN…PRGKVRLSMR (69 aa)). The tract at residues 696 to 771 (ETGAELEDTR…QGHVPDFLKD (76 aa)) is disordered. Residues 702–771 (EDTRPAREPR…QGHVPDFLKD (70 aa)) show a composition bias toward basic and acidic residues.

This sequence belongs to the polyribonucleotide nucleotidyltransferase family. Mg(2+) serves as cofactor.

The protein localises to the cytoplasm. It catalyses the reaction RNA(n+1) + phosphate = RNA(n) + a ribonucleoside 5'-diphosphate. In terms of biological role, involved in mRNA degradation. Catalyzes the phosphorolysis of single-stranded polyribonucleotides processively in the 3'- to 5'-direction. The protein is Polyribonucleotide nucleotidyltransferase of Sphingopyxis alaskensis (strain DSM 13593 / LMG 18877 / RB2256) (Sphingomonas alaskensis).